The primary structure comprises 687 residues: Protein 4.2 (687 aa).

A lipid anchor (N-myristoyl glycine) is attached at Gly-2. The segment at 31–39 is band 3 binding; sequence LFVRRGQPF. Phosphoserine is present on Ser-247.

This sequence belongs to the transglutaminase superfamily. Transglutaminase family. In terms of assembly, component of the ankyrin-1 complex in the erythrocyte, composed of ANK1, RHCE, RHAG, SLC4A1, EPB42, GYPA, GYPB and AQP1. Interacts with SLC4A1 (via the cytoplasmic domain); this interaction is mediated by the SLC4A1 Band 3-I dimer. Interacts with ANK1 (via ANK 1-13 repeats). Interacts with AQP1 (via the C-terminal).

The protein resides in the cell membrane. It is found in the cytoplasm. Its subcellular location is the cytoskeleton. Functionally, component of the ankyrin-1 complex, a multiprotein complex involved in the stability and shape of the erythrocyte membrane. The sequence is that of Protein 4.2 from Bos taurus (Bovine).